Consider the following 455-residue polypeptide: Chromosomal replication initiator protein DnaA 2 (455 aa).

The domain I, interacts with DnaA modulators stretch occupies residues 1–95 (MLTCNDCSTW…KRSSPQIAAS (95 aa)). Positions 96-112 (VTKPAVEVSEENKDFQL) are domain II. The domain III, AAA+ region stretch occupies residues 113 to 328 (KLNGAYRFDN…GAINKLTAYC (216 aa)). ATP-binding residues include Gly157, Gly159, Lys160, and Thr161. The segment at 329 to 455 (LLFNKPLTET…IAIDSPQHFV (127 aa)) is domain IV, binds dsDNA.

It belongs to the DnaA family. In terms of assembly, oligomerizes as a right-handed, spiral filament on DNA at oriC.

The protein localises to the cytoplasm. Functionally, plays an essential role in the initiation and regulation of chromosomal replication. ATP-DnaA binds to the origin of replication (oriC) to initiate formation of the DNA replication initiation complex once per cell cycle. Binds the DnaA box (a 9 base pair repeat at the origin) and separates the double-stranded (ds)DNA. Forms a right-handed helical filament on oriC DNA; dsDNA binds to the exterior of the filament while single-stranded (ss)DNA is stabiized in the filament's interior. The ATP-DnaA-oriC complex binds and stabilizes one strand of the AT-rich DNA unwinding element (DUE), permitting loading of DNA polymerase. After initiation quickly degrades to an ADP-DnaA complex that is not apt for DNA replication. Binds acidic phospholipids. This is Chromosomal replication initiator protein DnaA 2 from Chlamydia muridarum (strain MoPn / Nigg).